Reading from the N-terminus, the 290-residue chain is uncharacterized protein (290 aa).

Positions S161 to S216 form a coiled coil. Residues A236–V256 form a helical membrane-spanning segment.

It is found in the mitochondrion membrane. This is an uncharacterized protein from Schizosaccharomyces pombe (strain 972 / ATCC 24843) (Fission yeast).